The sequence spans 694 residues: Threonine--tRNA ligase (694 aa).

Residues 8-74 (NFVNTSVTTH…EETATFTAVP (67 aa)) enclose the TGS domain. The tract at residues 273–579 (DHRRLGTELD…LLEHYAGAFP (307 aa)) is catalytic. The Zn(2+) site is built by C378, H429, and H556.

This sequence belongs to the class-II aminoacyl-tRNA synthetase family. As to quaternary structure, homodimer. The cofactor is Zn(2+).

Its subcellular location is the cytoplasm. It carries out the reaction tRNA(Thr) + L-threonine + ATP = L-threonyl-tRNA(Thr) + AMP + diphosphate + H(+). In terms of biological role, catalyzes the attachment of threonine to tRNA(Thr) in a two-step reaction: L-threonine is first activated by ATP to form Thr-AMP and then transferred to the acceptor end of tRNA(Thr). Also edits incorrectly charged L-seryl-tRNA(Thr). The polypeptide is Threonine--tRNA ligase (Corynebacterium efficiens (strain DSM 44549 / YS-314 / AJ 12310 / JCM 11189 / NBRC 100395)).